Consider the following 346-residue polypeptide: 4-hydroxy-3-methylbut-2-enyl diphosphate reductase (346 aa).

Residue C19 participates in [4Fe-4S] cluster binding. The (2E)-4-hydroxy-3-methylbut-2-enyl diphosphate site is built by H48 and H84. Positions 48 and 84 each coordinate dimethylallyl diphosphate. Residues H48 and H84 each coordinate isopentenyl diphosphate. C106 is a binding site for [4Fe-4S] cluster. H134 contributes to the (2E)-4-hydroxy-3-methylbut-2-enyl diphosphate binding site. H134 serves as a coordination point for dimethylallyl diphosphate. H134 contributes to the isopentenyl diphosphate binding site. E136 (proton donor) is an active-site residue. Position 175 (T175) interacts with (2E)-4-hydroxy-3-methylbut-2-enyl diphosphate. A [4Fe-4S] cluster-binding site is contributed by C205. S233, S234, N235, and S278 together coordinate (2E)-4-hydroxy-3-methylbut-2-enyl diphosphate. S233, S234, N235, and S278 together coordinate dimethylallyl diphosphate. Positions 233, 234, 235, and 278 each coordinate isopentenyl diphosphate.

The protein belongs to the IspH family. [4Fe-4S] cluster is required as a cofactor.

It carries out the reaction isopentenyl diphosphate + 2 oxidized [2Fe-2S]-[ferredoxin] + H2O = (2E)-4-hydroxy-3-methylbut-2-enyl diphosphate + 2 reduced [2Fe-2S]-[ferredoxin] + 2 H(+). The enzyme catalyses dimethylallyl diphosphate + 2 oxidized [2Fe-2S]-[ferredoxin] + H2O = (2E)-4-hydroxy-3-methylbut-2-enyl diphosphate + 2 reduced [2Fe-2S]-[ferredoxin] + 2 H(+). The protein operates within isoprenoid biosynthesis; dimethylallyl diphosphate biosynthesis; dimethylallyl diphosphate from (2E)-4-hydroxy-3-methylbutenyl diphosphate: step 1/1. Its pathway is isoprenoid biosynthesis; isopentenyl diphosphate biosynthesis via DXP pathway; isopentenyl diphosphate from 1-deoxy-D-xylulose 5-phosphate: step 6/6. In terms of biological role, catalyzes the conversion of 1-hydroxy-2-methyl-2-(E)-butenyl 4-diphosphate (HMBPP) into a mixture of isopentenyl diphosphate (IPP) and dimethylallyl diphosphate (DMAPP). Acts in the terminal step of the DOXP/MEP pathway for isoprenoid precursor biosynthesis. In Brucella abortus (strain S19), this protein is 4-hydroxy-3-methylbut-2-enyl diphosphate reductase.